We begin with the raw amino-acid sequence, 364 residues long: D-alanine--D-alanine ligase A (364 aa).

Residues 145-348 form the ATP-grasp domain; the sequence is KRLLRDAGLN…YTDLITRLIE (204 aa). 175–230 lines the ATP pocket; sequence ESKLGLPLFVKPANQGSSVGVSKVTSEEQYAIAVDLAFEFDHKVIVEQGIKGREIE. The Mg(2+) site is built by Asp-302, Glu-315, and Asn-317.

Belongs to the D-alanine--D-alanine ligase family. Mg(2+) serves as cofactor. The cofactor is Mn(2+).

It is found in the cytoplasm. It catalyses the reaction 2 D-alanine + ATP = D-alanyl-D-alanine + ADP + phosphate + H(+). It participates in cell wall biogenesis; peptidoglycan biosynthesis. Its function is as follows. Cell wall formation. The protein is D-alanine--D-alanine ligase A (ddlA) of Escherichia coli O157:H7.